Consider the following 666-residue polypeptide: Calpain-10 (666 aa).

The Calpain catalytic domain occupies 13 to 321 (LFRDAAFPAS…FDEVTIGYPV (309 aa)). Catalysis depends on residues cysteine 73, histidine 238, and asparagine 263. 2 domain III regions span residues 322 to 488 (TEAG…ISLS) and 507 to 648 (EWET…IHSQ).

This sequence belongs to the peptidase C2 family. In terms of tissue distribution, ubiquitous.

Its subcellular location is the cytoplasm. It is found in the nucleus. Calcium-regulated non-lysosomal thiol-protease which catalyzes limited proteolysis of substrates involved in cytoskeletal remodeling and signal transduction. May play a role in insulin-stimulated glucose uptake. This is Calpain-10 (Capn10) from Rattus norvegicus (Rat).